The primary structure comprises 717 residues: Coupling protein TraD (717 aa).

The Cytoplasmic portion of the chain corresponds to 1–27 (MSFNAKDMTQGGQIASMRIRMFSQIAN). The helical transmembrane segment at 28–47 (IMLYCLFIFFWILVGLVLWI) threads the bilayer. At 48–104 (KISWQTFVNGCIYWWCTTLEGMRDLIKSQPVYEIQYYGKTFRMNAAQVLHDKYMIWC) the chain is on the periplasmic side. Residues 105–130 (SEQLWSAFVLAAVVALVICLITFFVV) traverse the membrane as a helical segment. Over 131-717 (SWILGRQGKQ…GEDVEPGDDF (587 aa)) the chain is Cytoplasmic. Residue 192 to 199 (GTVGAGKS) participates in ATP binding. 2 disordered regions span residues 614–639 (EDVTQAEQPQQPVSPAINDKKSDSGV) and 650–669 (LKMKPEEEMEQQLPPGISES).

The protein belongs to the TrwB coupling protein family. In terms of assembly, interacts with relaxosome component TraM. May form a hexamer in the membrane.

Its subcellular location is the cell inner membrane. Functionally, conjugative DNA transfer (CDT) is the unidirectional transfer of ssDNA plasmid from a donor to a recipient cell. It is the central mechanism by which antibiotic resistance and virulence factors are propagated in bacterial populations. Couples the transferosome to a type IV secretion system. Probably forms a pore through which single-stranded plasmid DNA is transferred to the secretion system. The last 37 residues are important for determining plasmid specificity and transfer efficiency, with additional specificity conferred by the TraD-TraM pair. The sequence is that of Coupling protein TraD (traD) from Escherichia coli (strain K12).